Reading from the N-terminus, the 566-residue chain is Glutamate--tRNA ligase (566 aa).

The 'HIGH' region motif lies at 105-115; the sequence is PNPDGPIHLGN.

It belongs to the class-I aminoacyl-tRNA synthetase family. Glutamate--tRNA ligase type 2 subfamily.

Its subcellular location is the cytoplasm. It carries out the reaction tRNA(Glu) + L-glutamate + ATP = L-glutamyl-tRNA(Glu) + AMP + diphosphate. In terms of biological role, catalyzes the attachment of glutamate to tRNA(Glu) in a two-step reaction: glutamate is first activated by ATP to form Glu-AMP and then transferred to the acceptor end of tRNA(Glu). The protein is Glutamate--tRNA ligase of Sulfurisphaera tokodaii (strain DSM 16993 / JCM 10545 / NBRC 100140 / 7) (Sulfolobus tokodaii).